We begin with the raw amino-acid sequence, 636 residues long: MPLYTTKKSNKLRASMFDEKPAKDYDPEAEPRDGDDDQSGSEADSDVERAETEHYVTVGKSKLRKAEAPTLGPEYSGTRVSRKALEESDEEDFEDEEEDDEEDDDDEDDLEDGESETGSEEFADPDTADLERDHIDEDAEISSDNALGEDDADWAEKFTFRGSSKPKTPAKTSKKDDLAVRIKKRPTAADFMSGSEDDEEEEDDEEDLEEDEEDEEDSEEGEQNGLFDMEAEETEDDEGEDDEEELDGALLSGSDDEEGDSEEDDEDDEEGSGDEDEDEDDEDEDEDEDDESGDDDEKNDVNAELRKIMAEDEKKIVSTFSKAAEADAQKGVAVRSQRRIFDSILNLRIRLQKALIAANTFNCVEKPENFKEKPYEAAEEAAVKLWNTIDSVRNSFLPEQVKAKAGEKRKRDAIELDTPAQEIWEVLEAVEGPANKYRRQVLDKWSTRVRSTTASMTKERRLAQSAGSQSLVSVLDDQLLSADRLIKKARTPRSCAPAQAAKKVEEDADIYDDADFYQLLLKELVDQRSSDSAAPGESVATVRWAALKEAKTRKQVDRKASKGRKLRFTVHEKLQNFMAPEDRRSWEEHAIDRFFGTLFGQKMVLKEDEAEAEAAEEDEEMGGVNVEEAGLKLFRS.

The interval 1 to 303 (MPLYTTKKSN…DDDEKNDVNA (303 aa)) is disordered. The span at 16-32 (MFDEKPAKDYDPEAEPR) shows a compositional bias: basic and acidic residues. Composition is skewed to acidic residues over residues 33–45 (DGDDDQSGSEADS), 87–128 (ESDE…PDTA), 136–153 (DEDAEISSDNALGEDDAD), 195–222 (SEDDEEEEDDEEDLEEDEEDEEDSEEGE), 229–247 (MEAEETEDDEGEDDEEELD), and 254–298 (SDDE…DDEK).

Belongs to the AATF family.

It localises to the nucleus. The protein resides in the nucleolus. The sequence is that of Protein bfr2 (bfr2) from Neurospora crassa (strain ATCC 24698 / 74-OR23-1A / CBS 708.71 / DSM 1257 / FGSC 987).